A 252-amino-acid chain; its full sequence is D-aminoacyl-tRNA deacylase (252 aa).

Belongs to the DtdA deacylase family. Monomer. Zn(2+) serves as cofactor.

The catalysed reaction is a D-aminoacyl-tRNA + H2O = a tRNA + a D-alpha-amino acid + H(+). The enzyme catalyses glycyl-tRNA(Ala) + H2O = tRNA(Ala) + glycine + H(+). D-aminoacyl-tRNA deacylase with broad substrate specificity. By recycling D-aminoacyl-tRNA to D-amino acids and free tRNA molecules, this enzyme counteracts the toxicity associated with the formation of D-aminoacyl-tRNA entities in vivo. This chain is D-aminoacyl-tRNA deacylase, found in Pyrobaculum arsenaticum (strain DSM 13514 / JCM 11321 / PZ6).